Here is a 168-residue protein sequence, read N- to C-terminus: N-alpha-acetyltransferase 50 (168 aa).

Residues 5–154 (IELGDVTPHN…DAHVLQKSLR (150 aa)) enclose the N-acetyltransferase domain. Residue Tyr30 coordinates substrate. The active site involves Tyr72. Met74 provides a ligand contact to substrate. 76-89 (LGCLAPYRRLGIGT) provides a ligand contact to acetyl-CoA. Residue His111 is part of the active site. Residue 116–125 (NESAIDFYQK) coordinates CoA. The segment at 137 to 140 (YYKR) is substrate.

Belongs to the acetyltransferase family. GNAT subfamily. Interacts with naa35.

It is found in the cytoplasm. It localises to the nucleus. It catalyses the reaction N-terminal L-methionyl-L-alanyl-[protein] + acetyl-CoA = N-terminal N(alpha)-acetyl-L-methionyl-L-alanyl-[protein] + CoA + H(+). The enzyme catalyses N-terminal L-methionyl-L-seryl-[protein] + acetyl-CoA = N-terminal N(alpha)-acetyl-L-methionyl-L-seryl-[protein] + CoA + H(+). The catalysed reaction is N-terminal L-methionyl-L-valyl-[protein] + acetyl-CoA = N-terminal N(alpha)-acetyl-L-methionyl-L-valyl-[protein] + CoA + H(+). It carries out the reaction N-terminal L-methionyl-L-threonyl-[protein] + acetyl-CoA = N-terminal N(alpha)-acetyl-L-methionyl-L-threonyl-[protein] + CoA + H(+). It catalyses the reaction N-terminal L-methionyl-L-lysyl-[protein] + acetyl-CoA = N-terminal N(alpha)-acetyl-L-methionyl-L-lysyl-[protein] + CoA + H(+). The enzyme catalyses N-terminal L-methionyl-L-leucyl-[protein] + acetyl-CoA = N-terminal N(alpha)-acetyl-L-methionyl-L-leucyl-[protein] + CoA + H(+). The catalysed reaction is N-terminal L-methionyl-L-phenylalanyl-[protein] + acetyl-CoA = N-terminal N(alpha)-acetyl-L-methionyl-L-phenylalanyl-[protein] + CoA + H(+). It carries out the reaction N-terminal L-methionyl-L-tyrosyl-[protein] + acetyl-CoA = N-terminal N(alpha)-acetyl-L-methionyl-L-tyrosyl-[protein] + CoA + H(+). N-alpha-acetyltransferase that acetylates the N-terminus of proteins that retain their initiating methionine. Has a broad substrate specificity: able to acetylate the initiator methionine of most peptides, except for those with a proline in second position. Also displays N-epsilon-acetyltransferase activity by mediating acetylation of the side chain of specific lysines on proteins. The relevance of N-epsilon-acetyltransferase activity is however unclear. Required for sister chromatid cohesion during mitosis by promoting binding of CDCA5/sororin to cohesin. Essential in embryonic cell proliferation and survival. In Danio rerio (Zebrafish), this protein is N-alpha-acetyltransferase 50 (naa50).